Here is a 365-residue protein sequence, read N- to C-terminus: Gibberellin 20 oxidase 1-A (365 aa).

The Fe2OG dioxygenase domain occupies 199-299 (GNDSIMRLNY…RKSLAFFLCP (101 aa)). Fe cation-binding residues include H224, D226, and H280. R290 is an active-site residue.

It belongs to the iron/ascorbate-dependent oxidoreductase family. GA20OX subfamily. It depends on Fe cation as a cofactor. Requires L-ascorbate as cofactor. In terms of tissue distribution, expressed in nodes and the ear of the elongating stem.

It catalyses the reaction gibberellin A12 + 2 2-oxoglutarate + 3 O2 + H(+) = gibberellin A9 + 2 succinate + 3 CO2 + 2 H2O. It carries out the reaction gibberellin A53 + 2 2-oxoglutarate + 3 O2 + H(+) = gibberellin A20 + 2 succinate + 3 CO2 + 2 H2O. Key oxidase enzyme in the biosynthesis of gibberellin that catalyzes the conversion of GA12 and GA53 to GA9 and GA20 respectively, via a three-step oxidation at C-20 of the GA skeleton. The protein is Gibberellin 20 oxidase 1-A (GA20ox1A) of Triticum aestivum (Wheat).